The chain runs to 291 residues: Deaminated glutathione amidase (291 aa).

In terms of domain architecture, CN hydrolase spans 13-268; sequence KRIGLGQITS…NDIAFVDIDL (256 aa). The active-site Proton acceptor is the glutamate 52. Lysine 130 functions as the Proton donor in the catalytic mechanism. The Nucleophile role is filled by cysteine 172.

The protein belongs to the carbon-nitrogen hydrolase superfamily. NIT1/NIT2 family.

The catalysed reaction is N-(4-oxoglutaryl)-L-cysteinylglycine + H2O = L-cysteinylglycine + 2-oxoglutarate. Catalyzes the hydrolysis of the amide bond in N-(4-oxoglutarate)-L-cysteinylglycine (deaminated glutathione), a metabolite repair reaction to dispose of the harmful deaminated glutathione. The chain is Deaminated glutathione amidase (nit1-1) from Dictyostelium discoideum (Social amoeba).